Reading from the N-terminus, the 167-residue chain is Endothelin-3 (167 aa).

The signal sequence occupies residues 1–19 (MELGLWLLLGLTVTSAAAA). Residues 20-50 (LPAQPGNAGQERGPGRSGDQEEKRVPAHHRP) constitute a propeptide that is removed on maturation. Residues 22–45 (AQPGNAGQERGPGRSGDQEEKRVP) are disordered. Disulfide bonds link Cys-53/Cys-67 and Cys-55/Cys-63. A propeptide spanning residues 74–167 (INTPEQTVPY…KSRTDKVHQP (94 aa)) is cleaved from the precursor. A disordered region spans residues 85–112 (LSNHRGSLRGKRSSGPVPESSQSSPQTR). Residues 97–109 (SSGPVPESSQSSP) show a composition bias toward low complexity. The segment at 115–135 (CACSGVDDKACAYFCAHVTSY) is endothelin-like. Residues 140-149 (EKAAAEEKQE) are compositionally biased toward basic and acidic residues. A disordered region spans residues 140-167 (EKAAAEEKQETGGPRQRLKSRTDKVHQP).

The protein belongs to the endothelin/sarafotoxin family.

Its subcellular location is the secreted. Functionally, endothelins are endothelium-derived vasoconstrictor peptides. The polypeptide is Endothelin-3 (Edn3) (Rattus norvegicus (Rat)).